We begin with the raw amino-acid sequence, 1958 residues long: Rho GTPase-activating protein 21 (1958 aa).

Residues 1–42 (MMATRRTGLSEGDGDKLKACEVSKNKDGKEQSETVSLSEDET) are disordered. Over residues 13–32 (DGDKLKACEVSKNKDGKEQS) the composition is skewed to basic and acidic residues. Phosphoserine is present on residues Ser36 and Ser57. The 110-residue stretch at 50–159 (TVTLKRTSQG…TLELSVMPKD (110 aa)) folds into the PDZ domain. Polar residues-rich tracts occupy residues 286-295 (SNRNNHTGPS), 306-325 (SEQTSLKTVSRTTSPPLSIP), and 418-436 (ASQSTTDYNQVVPNRTTLQ). Disordered regions lie at residues 286 to 325 (SNRNNHTGPSHRTEEVRYGVSEQTSLKTVSRTTSPPLSIP) and 418 to 458 (ASQS…QRSV). Low complexity predominate over residues 448 to 458 (PQSVQIRQRSV). Ser459 is subject to Phosphoserine. Omega-N-methylarginine occurs at positions 554 and 575. Residues Ser612, Ser616, and Ser625 each carry the phosphoserine modification. The segment covering 659 to 687 (SLLNQQTWVRTDSAPDQQVETGKSPSLSG) has biased composition (polar residues). A disordered region spans residues 659-751 (SLLNQQTWVR…PSGRQTPQPL (93 aa)). Ser717 carries the phosphoserine modification. A compositionally biased stretch (basic and acidic residues) spans 729–742 (LDNKEAVILREKPP). The residue at position 747 (Thr747) is a Phosphothreonine. Phosphoserine is present on residues Ser857, Ser862, and Ser881. The interval 859-885 (DHESVGPPSLDAQPNSKTERSKSYDEG) is disordered. A compositionally biased stretch (basic and acidic residues) spans 875-885 (KTERSKSYDEG). A Phosphotyrosine modification is found at Tyr882. Phosphoserine is present on residues Ser924, Ser926, Ser954, Ser1099, and Ser1115. The tract at residues 930–1097 (SDAAKEGWLH…AKSEPKTQSP (168 aa)) is interaction with ARF1 and ARF6. The PH domain maps to 931–1040 (DAAKEGWLHF…WIKTIQESSN (110 aa)). Residues 1086–1133 (LGAKSEPKTQSPHSPKEESERKLLSKDDTSPPKDKGTWRKGIPSIMRK) are disordered. The span at 1099-1122 (SPKEESERKLLSKDDTSPPKDKGT) shows a compositional bias: basic and acidic residues. Residues 1147-1339 (VRLDDCPPAH…TLIQHHDWFF (193 aa)) enclose the Rho-GAP domain. 4 disordered regions span residues 1348 to 1401 (LTTV…GSGK), 1418 to 1575 (SRKR…KHSE), 1598 to 1642 (SLDS…SEFP), and 1655 to 1686 (RGKLQEVTKSSRRNSEGSELSCTEGSLTSSLD). A compositionally biased stretch (polar residues) spans 1349–1362 (TTVQEESTVDSQPV). Low complexity predominate over residues 1383-1401 (SDSATSDSTKSKGSWGSGK). Phosphoserine is present on residues Ser1418, Ser1432, and Ser1433. Composition is skewed to basic and acidic residues over residues 1441-1466 (FFKKENVEQCHNDTKEESKKESETLG) and 1477-1493 (NSTRKDPSTTKDEKISL). Lys1444 participates in a covalent cross-link: Glycyl lysine isopeptide (Lys-Gly) (interchain with G-Cter in SUMO). The residue at position 1504 (Ser1504) is a Phosphoserine. Phosphothreonine is present on Thr1516. At Ser1527 the chain carries Phosphoserine. Over residues 1544–1559 (SDSGTLLSTSSQASLA) the composition is skewed to low complexity. The segment at 1592 to 1861 (SATYLTSLDS…WLARERLRTS (270 aa)) is interaction with CTNNA1. Polar residues predominate over residues 1603–1612 (RLSPEVQSVA). The segment covering 1624-1634 (SELISEGRPVE) has biased composition (basic and acidic residues). Position 1669 is a phosphoserine (Ser1669). Positions 1671–1686 (GSELSCTEGSLTSSLD) are enriched in polar residues. Thr1682 is modified (phosphothreonine). Ser1742 carries the phosphoserine modification. Positions 1860–1958 (TSTSDLSRGE…GSKAEFHPCL (99 aa)) are disordered. A compositionally biased stretch (polar residues) spans 1874–1909 (QTENPSTREIATTDTPLSLHCNTGSSSSTLASTNRP). Phosphoserine is present on Ser1917. Residues 1918 to 1931 (PDQINGESFQNVSK) are compositionally biased toward polar residues.

In terms of assembly, interacts with GTP-bound ARF1 and ARF6. Interacts with CTNNA1. Sumoylated with SUMO2 and SUMO3 in proliferating lymphocytes. In terms of tissue distribution, widely expressed with higher expression in brain, heart, skeletal muscle and placenta.

It localises to the golgi apparatus membrane. The protein localises to the cell junction. Its subcellular location is the cytoplasmic vesicle membrane. The protein resides in the cytoplasm. It is found in the cytoskeleton. In terms of biological role, functions as a GTPase-activating protein (GAP) for RHOA and CDC42. Downstream partner of ARF1 which may control Golgi apparatus structure and function. Also required for CTNNA1 recruitment to adherens junctions. The sequence is that of Rho GTPase-activating protein 21 (ARHGAP21) from Homo sapiens (Human).